The primary structure comprises 499 residues: Alpha-amylase B (499 aa).

A signal peptide spans Met1–Ala21. A disulfide bond links Cys51 and Cys59. 2 residues coordinate substrate: Gln56 and Trp104. Asn142 serves as a coordination point for Ca(2+). Residue His143 participates in substrate binding. A disulfide bridge connects residues Cys171 and Cys185. Residues Glu183 and Asp196 each contribute to the Ca(2+) site. Residue Asn218 is glycosylated (N-linked (GlcNAc...) asparagine). Position 225 (Arg225) interacts with substrate. Residues Asp227, His231, and Glu251 each contribute to the Ca(2+) site. Asp227 acts as the Nucleophile in catalysis. Lys230–His231 lines the substrate pocket. The active-site Proton donor is the Glu251. Position 255 (Gly255) interacts with substrate. Cys261 and Cys304 are oxidised to a cystine. Asp318 and Arg365 together coordinate substrate. A disulfide bond links Cys461 and Cys496.

This sequence belongs to the glycosyl hydrolase 13 family. Ca(2+) is required as a cofactor.

It carries out the reaction Endohydrolysis of (1-&gt;4)-alpha-D-glucosidic linkages in polysaccharides containing three or more (1-&gt;4)-alpha-linked D-glucose units.. The polypeptide is Alpha-amylase B (amyB) (Aspergillus awamori (Black koji mold)).